Reading from the N-terminus, the 66-residue chain is MPKQKTHRGLAKRVKRTGGGGLKRGRAFTSHRFHGKTKKQRRQLRKASMVAKGDYKRIRQQLARMK.

2 stretches are compositionally biased toward basic residues: residues 1–16 (MPKQKTHRGLAKRVKR) and 23–45 (KRGRAFTSHRFHGKTKKQRRQLR). The segment at 1–53 (MPKQKTHRGLAKRVKRTGGGGLKRGRAFTSHRFHGKTKKQRRQLRKASMVAKG) is disordered.

It belongs to the bacterial ribosomal protein bL35 family.

The protein is Large ribosomal subunit protein bL35 of Enterococcus faecalis (strain ATCC 700802 / V583).